The chain runs to 452 residues: Pup--protein ligase (452 aa).

Glu-9 is a binding site for Mg(2+). ATP is bound at residue Arg-53. A Mg(2+)-binding site is contributed by Tyr-55. The active-site Proton acceptor is the Asp-57. Position 63 (Glu-63) interacts with Mg(2+). Thr-66 and Trp-419 together coordinate ATP.

This sequence belongs to the Pup ligase/Pup deamidase family. Pup-conjugating enzyme subfamily.

The enzyme catalyses ATP + [prokaryotic ubiquitin-like protein]-L-glutamate + [protein]-L-lysine = ADP + phosphate + N(6)-([prokaryotic ubiquitin-like protein]-gamma-L-glutamyl)-[protein]-L-lysine.. It functions in the pathway protein degradation; proteasomal Pup-dependent pathway. Its pathway is protein modification; protein pupylation. Its function is as follows. Catalyzes the covalent attachment of the prokaryotic ubiquitin-like protein modifier Pup to the proteasomal substrate proteins, thereby targeting them for proteasomal degradation. This tagging system is termed pupylation. The ligation reaction involves the side-chain carboxylate of the C-terminal glutamate of Pup and the side-chain amino group of a substrate lysine. This is Pup--protein ligase from Actinosynnema mirum (strain ATCC 29888 / DSM 43827 / JCM 3225 / NBRC 14064 / NCIMB 13271 / NRRL B-12336 / IMRU 3971 / 101).